Reading from the N-terminus, the 219-residue chain is Pyridoxine/pyridoxamine 5'-phosphate oxidase (219 aa).

Residues 13-16 (RVEY) and Lys-76 contribute to the substrate site. Residues 71 to 76 (RSVLCK), 86 to 87 (FT), Lys-93, and Gln-115 contribute to the FMN site. Substrate contacts are provided by Tyr-133, Arg-137, and Ser-141. FMN is bound by residues 150–151 (QS) and Trp-196. Position 202–204 (202–204 (RVH)) interacts with substrate. An FMN-binding site is contributed by Arg-206.

The protein belongs to the pyridoxamine 5'-phosphate oxidase family. Homodimer. FMN is required as a cofactor.

The catalysed reaction is pyridoxamine 5'-phosphate + O2 + H2O = pyridoxal 5'-phosphate + H2O2 + NH4(+). The enzyme catalyses pyridoxine 5'-phosphate + O2 = pyridoxal 5'-phosphate + H2O2. It participates in cofactor metabolism; pyridoxal 5'-phosphate salvage; pyridoxal 5'-phosphate from pyridoxamine 5'-phosphate: step 1/1. The protein operates within cofactor metabolism; pyridoxal 5'-phosphate salvage; pyridoxal 5'-phosphate from pyridoxine 5'-phosphate: step 1/1. Catalyzes the oxidation of either pyridoxine 5'-phosphate (PNP) or pyridoxamine 5'-phosphate (PMP) into pyridoxal 5'-phosphate (PLP). The sequence is that of Pyridoxine/pyridoxamine 5'-phosphate oxidase from Mycobacterium leprae (strain TN).